The following is a 681-amino-acid chain: Angiomotin-like 2b (681 aa).

The span at 68 to 84 shows a compositional bias: low complexity; that stretch reads GGGAASSSQSSSESLSQ. The disordered stretch occupies residues 68 to 106; it reads GGGAASSSQSSSESLSQDEPHSPQLSTRQEPQGQEHQVD. Positions 90-102 are enriched in polar residues; it reads PQLSTRQEPQGQE. At Tyr126 the chain carries Phosphotyrosine; by FGFR1. Coiled coils occupy residues 268–319, 362–441, and 481–508; these read NACS…LMKG, IEKL…LQAT, and VYTLQENLREKEERILSLEADKIRWEQK. A disordered region spans residues 589–618; sequence QLGALQPATADSSIISSHSTPAHTAQGKER. Positions 597-611 are enriched in polar residues; sequence TADSSIISSHSTPAH. The short motif at 678–681 is the PDZ-binding element; the sequence is EIFI.

The protein belongs to the angiomotin family. In terms of assembly, interacts with SRC. Phosphorylation at Tyr-126 is necessary for efficient binding to SRC and synergistically functioning with SRC to activate the downstream MAPK pathway. In terms of tissue distribution, expressed in endothelial cells.

The protein resides in the recycling endosome. The protein localises to the cytoplasm. It is found in the cell projection. Its subcellular location is the podosome. It localises to the cell junction. In terms of biological role, required for proper architecture of actin filaments and for cell movements during embryogenesis. Plays a role in the radial actin fiber architecture in skin epithelial cells, thereby maintains cell geometry, size and cell interconnectivity within the skin. Plays an important role in coupling actin fibers to cell junctions in endothelial cells and is therefore required for correct endothelial cell morphology and maintenance of dorsal aorta lumen expansion during embryogenesis. May further play a role in the polarity, proliferation and migration of endothelial cells, and therefore participates in angiogenesis. May regulate the translocation of phosphorylated SRC to peripheral cell-matrix adhesion sites. The polypeptide is Angiomotin-like 2b (Danio rerio (Zebrafish)).